The primary structure comprises 623 residues: Putative ABC transporter ATP-binding protein MG014 homolog (623 aa).

The 310-residue stretch at 16 to 325 (LILAPLFTFA…YIVLGLILTS (310 aa)) folds into the ABC transmembrane type-1 domain. Transmembrane regions (helical) follow at residues 27 to 47 (IIID…VFSI), 86 to 106 (VILL…CASI), 157 to 177 (FLRL…FAIA), 180 to 200 (SDMS…IGIL), 266 to 286 (NIPF…LLVF), and 307 to 327 (IFAF…TSLT). The ABC transporter domain maps to 365-611 (LEFKNVAFGL…CDIYVKMKQA (247 aa)). 400–407 (GPTGSGKS) contacts ATP.

This sequence belongs to the ABC transporter superfamily.

It localises to the cell membrane. The sequence is that of Putative ABC transporter ATP-binding protein MG014 homolog from Mycoplasma pneumoniae (strain ATCC 29342 / M129 / Subtype 1) (Mycoplasmoides pneumoniae).